The following is a 456-amino-acid chain: Bifunctional protein GlmU (456 aa).

Residues 1–229 form a pyrophosphorylase region; sequence MLNNAMSVVI…LSEVEGVNNR (229 aa). UDP-N-acetyl-alpha-D-glucosamine-binding positions include 11–14, Lys-25, Gln-76, 81–82, 103–105, Gly-140, Glu-154, Asn-169, and Asn-227; these read LAAG, GT, and YGD. Residue Asp-105 coordinates Mg(2+). A Mg(2+)-binding site is contributed by Asn-227. The linker stretch occupies residues 230–250; the sequence is LQLSRLERVYQSEQAEKLLLA. The N-acetyltransferase stretch occupies residues 251–456; sequence GVMLRDPARF…EGWRRPVKKK (206 aa). UDP-N-acetyl-alpha-D-glucosamine-binding residues include Arg-333 and Lys-351. His-363 acts as the Proton acceptor in catalysis. The UDP-N-acetyl-alpha-D-glucosamine site is built by Tyr-366 and Asn-377. Acetyl-CoA-binding positions include Ala-380, 386-387, Ser-405, Ala-423, and Arg-440; that span reads NY.

In the N-terminal section; belongs to the N-acetylglucosamine-1-phosphate uridyltransferase family. The protein in the C-terminal section; belongs to the transferase hexapeptide repeat family. As to quaternary structure, homotrimer. The cofactor is Mg(2+).

It localises to the cytoplasm. The catalysed reaction is alpha-D-glucosamine 1-phosphate + acetyl-CoA = N-acetyl-alpha-D-glucosamine 1-phosphate + CoA + H(+). It catalyses the reaction N-acetyl-alpha-D-glucosamine 1-phosphate + UTP + H(+) = UDP-N-acetyl-alpha-D-glucosamine + diphosphate. It functions in the pathway nucleotide-sugar biosynthesis; UDP-N-acetyl-alpha-D-glucosamine biosynthesis; N-acetyl-alpha-D-glucosamine 1-phosphate from alpha-D-glucosamine 6-phosphate (route II): step 2/2. The protein operates within nucleotide-sugar biosynthesis; UDP-N-acetyl-alpha-D-glucosamine biosynthesis; UDP-N-acetyl-alpha-D-glucosamine from N-acetyl-alpha-D-glucosamine 1-phosphate: step 1/1. It participates in bacterial outer membrane biogenesis; LPS lipid A biosynthesis. Functionally, catalyzes the last two sequential reactions in the de novo biosynthetic pathway for UDP-N-acetylglucosamine (UDP-GlcNAc). The C-terminal domain catalyzes the transfer of acetyl group from acetyl coenzyme A to glucosamine-1-phosphate (GlcN-1-P) to produce N-acetylglucosamine-1-phosphate (GlcNAc-1-P), which is converted into UDP-GlcNAc by the transfer of uridine 5-monophosphate (from uridine 5-triphosphate), a reaction catalyzed by the N-terminal domain. This is Bifunctional protein GlmU from Shigella dysenteriae serotype 1 (strain Sd197).